The following is a 412-amino-acid chain: CCA-adding enzyme (412 aa).

2 residues coordinate ATP: Ser-41 and Lys-44. Positions 41 and 44 each coordinate CTP. Mg(2+)-binding residues include Asp-53, Asp-55, and Asp-106. Residues His-129, Lys-149, and Tyr-158 each coordinate ATP. CTP-binding residues include His-129, Lys-149, and Tyr-158.

This sequence belongs to the tRNA nucleotidyltransferase/poly(A) polymerase family. Archaeal CCA-adding enzyme subfamily. Homodimer. The cofactor is Mg(2+).

The enzyme catalyses a tRNA precursor + 2 CTP + ATP = a tRNA with a 3' CCA end + 3 diphosphate. The catalysed reaction is a tRNA with a 3' CCA end + 2 CTP + ATP = a tRNA with a 3' CCACCA end + 3 diphosphate. Catalyzes the addition and repair of the essential 3'-terminal CCA sequence in tRNAs without using a nucleic acid template. Adds these three nucleotides in the order of C, C, and A to the tRNA nucleotide-73, using CTP and ATP as substrates and producing inorganic pyrophosphate. tRNA 3'-terminal CCA addition is required both for tRNA processing and repair. Also involved in tRNA surveillance by mediating tandem CCA addition to generate a CCACCA at the 3' terminus of unstable tRNAs. While stable tRNAs receive only 3'-terminal CCA, unstable tRNAs are marked with CCACCA and rapidly degraded. This chain is CCA-adding enzyme, found in Saccharolobus solfataricus (strain ATCC 35092 / DSM 1617 / JCM 11322 / P2) (Sulfolobus solfataricus).